The following is a 206-amino-acid chain: Flavin reductase (NADPH) (206 aa).

Positions 10, 12, 13, 14, 15, 35, 38, and 39 each coordinate NADP(+). The residue at position 42 (serine 42) is a Phosphoserine. NADP(+)-binding residues include aspartate 54, valine 55, leucine 75, glycine 76, and arginine 78. Serine 82 carries the phosphoserine modification. The NADP(+) site is built by methionine 87, cysteine 109, histidine 132, histidine 153, and isoleucine 154. The active-site S-nitroso-cysteine intermediate; for S-nitroso-CoA-dependent nitrosyltransferase activity is the cysteine 109. Cysteine 188 acts as the S-nitroso-cysteine intermediate; for S-nitroso-CoA-dependent nitrosyltransferase activity in catalysis.

In terms of assembly, monomer. In terms of tissue distribution, at least expressed in the liver and erythrocyte.

Its subcellular location is the cytoplasm. The catalysed reaction is reduced riboflavin + NADP(+) = riboflavin + NADPH + 2 H(+). The enzyme catalyses bilirubin IXbeta + NADP(+) = biliverdin IXbeta + NADPH + H(+). It catalyses the reaction FMNH2 + NAD(+) = FMN + NADH + 2 H(+). It carries out the reaction FMNH2 + NADP(+) = FMN + NADPH + 2 H(+). The catalysed reaction is S-nitroso-CoA + L-cysteinyl-[protein] = S-nitroso-L-cysteinyl-[protein] + CoA. The enzyme catalyses L-cysteinyl-[SCAN] + S-nitroso-CoA = S-nitroso-L-cysteinyl-[SCAN] + CoA. It catalyses the reaction S-nitroso-L-cysteinyl-[SCAN] + L-cysteinyl-[protein] = L-cysteinyl-[SCAN] + S-nitroso-L-cysteinyl-[protein]. Enzyme that can both act as a NAD(P)H-dependent reductase and a S-nitroso-CoA-dependent nitrosyltransferase. Promotes fetal heme degradation during development. Also expressed in adult tissues, where it acts as a regulator of hematopoiesis, intermediary metabolism (glutaminolysis, glycolysis, TCA cycle and pentose phosphate pathway) and insulin signaling. Has a broad specificity oxidoreductase activity by catalyzing the NAD(P)H-dependent reduction of a variety of flavins, such as riboflavin, FAD or FMN, biliverdins, methemoglobin and PQQ (pyrroloquinoline quinone). Contributes to fetal heme catabolism by catalyzing reduction of biliverdin IXbeta into bilirubin IXbeta in the liver. Biliverdin IXbeta, which constitutes the major heme catabolite in the fetus is not present in adult. Does not reduce bilirubin IXalpha. Can also reduce the complexed Fe(3+) iron to Fe(2+) in the presence of FMN and NADPH. Acts as a protein nitrosyltransferase by catalyzing nitrosylation of cysteine residues of target proteins, such as HMOX2, INSR and IRS1. S-nitroso-CoA-dependent nitrosyltransferase activity is mediated via a 'ping-pong' mechanism: BLVRB first associates with both S-nitroso-CoA and protein substrate, nitric oxide group is then transferred from S-nitroso-CoA to Cys-109 and Cys-188 residues of BLVRB and from S-nitroso-BLVRB to the protein substrate. Inhibits insulin signaling by mediating nitrosylation of INSR and IRS1, leading to their inhibition. The sequence is that of Flavin reductase (NADPH) (BLVRB) from Bos taurus (Bovine).